A 131-amino-acid polypeptide reads, in one-letter code: Holo-[acyl-carrier-protein] synthase (131 aa).

The Mg(2+) site is built by D8 and E59.

The protein belongs to the P-Pant transferase superfamily. AcpS family. Mg(2+) is required as a cofactor.

It is found in the cytoplasm. It catalyses the reaction apo-[ACP] + CoA = holo-[ACP] + adenosine 3',5'-bisphosphate + H(+). Functionally, transfers the 4'-phosphopantetheine moiety from coenzyme A to a Ser of acyl-carrier-protein. In Rickettsia africae (strain ESF-5), this protein is Holo-[acyl-carrier-protein] synthase.